A 639-amino-acid chain; its full sequence is Mediator of RNA polymerase II transcription subunit 17 (639 aa).

Over residues 32–43 the composition is skewed to polar residues; sequence ASATVTTNGTTA. 2 disordered regions span residues 32–68 and 130–159; these read ASATVTTNGTTADSSEDSGSQQSVSSAPIQQNSEEHS and MGDADEESDLKPQEITDDDSNARLKPNNDS. Positions 48-57 are enriched in low complexity; that stretch reads DSGSQQSVSS. Polar residues predominate over residues 58 to 68; sequence APIQQNSEEHS. Residues 245–271 are a coiled coil; that stretch reads WKLRSLEDSKALLKENYAKLQKSLEVE.

The protein belongs to the Mediator complex subunit 17 family. As to quaternary structure, component of the Mediator complex.

Its subcellular location is the nucleus. Component of the Mediator complex, a coactivator involved in the regulated transcription of nearly all RNA polymerase II-dependent genes. Mediator functions as a bridge to convey information from gene-specific regulatory proteins to the basal RNA polymerase II transcription machinery. Mediator is recruited to promoters by direct interactions with regulatory proteins and serves as a scaffold for the assembly of a functional preinitiation complex with RNA polymerase II and the general transcription factors. The sequence is that of Mediator of RNA polymerase II transcription subunit 17 (SRB4) from Eremothecium gossypii (strain ATCC 10895 / CBS 109.51 / FGSC 9923 / NRRL Y-1056) (Yeast).